The chain runs to 252 residues: Cell division protein ZapD (252 aa).

It belongs to the ZapD family. Interacts with FtsZ.

It localises to the cytoplasm. Its function is as follows. Cell division factor that enhances FtsZ-ring assembly. Directly interacts with FtsZ and promotes bundling of FtsZ protofilaments, with a reduction in FtsZ GTPase activity. In Ralstonia nicotianae (strain ATCC BAA-1114 / GMI1000) (Ralstonia solanacearum), this protein is Cell division protein ZapD.